A 313-amino-acid polypeptide reads, in one-letter code: uncharacterized protein (313 aa).

Transmembrane regions (helical) follow at residues 41-61, 68-88, and 102-122; these read LAGT…GLMV, VHSV…FHYF, and QLLL…KLVL.

This sequence belongs to the cytochrome b family.

The protein localises to the mitochondrion membrane. This is an uncharacterized protein from Arabidopsis thaliana (Mouse-ear cress).